Here is a 196-residue protein sequence, read N- to C-terminus: Corrinoid adenosyltransferase CobA (196 aa).

36 to 42 (GNGKGKT) is a binding site for ATP.

It belongs to the Cob(I)alamin adenosyltransferase family. Homodimer.

It is found in the cytoplasm. The catalysed reaction is 2 cob(II)yrinate a,c diamide + reduced [electron-transfer flavoprotein] + 2 ATP = 2 adenosylcob(III)yrinate a,c-diamide + 2 triphosphate + oxidized [electron-transfer flavoprotein] + 3 H(+). It catalyses the reaction 2 cob(II)alamin + reduced [electron-transfer flavoprotein] + 2 ATP = 2 adenosylcob(III)alamin + 2 triphosphate + oxidized [electron-transfer flavoprotein] + 3 H(+). It participates in cofactor biosynthesis; adenosylcobalamin biosynthesis; adenosylcobalamin from cob(II)yrinate a,c-diamide: step 2/7. In terms of biological role, required for both de novo synthesis of the corrin ring for the assimilation of exogenous corrinoids. Participates in the adenosylation of a variety of incomplete and complete corrinoids. The polypeptide is Corrinoid adenosyltransferase CobA (btuR) (Salmonella typhimurium (strain LT2 / SGSC1412 / ATCC 700720)).